We begin with the raw amino-acid sequence, 79 residues long: Small ribosomal subunit protein bS18 (79 aa).

Belongs to the bacterial ribosomal protein bS18 family. In terms of assembly, part of the 30S ribosomal subunit. Forms a tight heterodimer with protein bS6.

In terms of biological role, binds as a heterodimer with protein bS6 to the central domain of the 16S rRNA, where it helps stabilize the platform of the 30S subunit. In Bacillus licheniformis (strain ATCC 14580 / DSM 13 / JCM 2505 / CCUG 7422 / NBRC 12200 / NCIMB 9375 / NCTC 10341 / NRRL NRS-1264 / Gibson 46), this protein is Small ribosomal subunit protein bS18.